We begin with the raw amino-acid sequence, 374 residues long: GDSL esterase/lipase At1g71250 (374 aa).

A signal peptide spans 1–28 (MNTNRKKMKVHIGGYVLILALTVSVILQ). Serine 48 acts as the Nucleophile in catalysis. The N-linked (GlcNAc...) asparagine glycan is linked to asparagine 162. Catalysis depends on residues aspartate 338 and histidine 341.

The protein belongs to the 'GDSL' lipolytic enzyme family.

It localises to the secreted. The protein is GDSL esterase/lipase At1g71250 of Arabidopsis thaliana (Mouse-ear cress).